Consider the following 219-residue polypeptide: MTKGILGKKVGMTQVFTDNGELVPVTVIDVTPNVVMQIKTVENDGYSAVQLGFDDKREVLSNKPEQGHAAKANTTPKRFIGEIRDAELGDIKVGDEVKADVFAEGETVDVTGTTKGHGYQGNIHKDNQSRGPMAHGSRYHRRPGSLGAIINRVFKGMKLPGRMGGKTVTMQHLQVVKVDLDNNVLLIKGNVPGANKSYVTIKNSVKANTKKSLSKQHNK.

Positions 113–142 (TTKGHGYQGNIHKDNQSRGPMAHGSRYHRR) are disordered.

This sequence belongs to the universal ribosomal protein uL3 family. Part of the 50S ribosomal subunit. Forms a cluster with proteins L14 and L19.

One of the primary rRNA binding proteins, it binds directly near the 3'-end of the 23S rRNA, where it nucleates assembly of the 50S subunit. In Limosilactobacillus reuteri (strain DSM 20016) (Lactobacillus reuteri), this protein is Large ribosomal subunit protein uL3.